The primary structure comprises 308 residues: Ribosomal protein L11 methyltransferase (308 aa).

S-adenosyl-L-methionine is bound by residues Thr-160, Gly-181, Asp-203, and Asn-245.

This sequence belongs to the methyltransferase superfamily. PrmA family.

The protein localises to the cytoplasm. It carries out the reaction L-lysyl-[protein] + 3 S-adenosyl-L-methionine = N(6),N(6),N(6)-trimethyl-L-lysyl-[protein] + 3 S-adenosyl-L-homocysteine + 3 H(+). Functionally, methylates ribosomal protein L11. The polypeptide is Ribosomal protein L11 methyltransferase (Thermoanaerobacter sp. (strain X514)).